Here is a 197-residue protein sequence, read N- to C-terminus: Probable GTP-binding protein EngB (197 aa).

The EngB-type G domain occupies 25-197 (SAPEIAFAGR…VRDEFFKFTR (173 aa)). GTP is bound by residues 33 to 40 (GRSNVGKS), 60 to 64 (GCTRQ), 79 to 82 (DLPG), 146 to 149 (TKID), and 177 to 179 (MSI). The Mg(2+) site is built by Ser-40 and Thr-62.

It belongs to the TRAFAC class TrmE-Era-EngA-EngB-Septin-like GTPase superfamily. EngB GTPase family. Requires Mg(2+) as cofactor.

In terms of biological role, necessary for normal cell division and for the maintenance of normal septation. The sequence is that of Probable GTP-binding protein EngB from Wolbachia pipientis wMel.